Consider the following 103-residue polypeptide: Sec-independent protein translocase protein TatA (103 aa).

Residues 1–21 form a helical membrane-spanning segment; sequence MSLGPWEIAIIVLLIIVLFGA. The interval 42-103 is disordered; that stretch reads VKEMQKDDET…QNYEDPNRTP (62 aa). Residues 52-90 are compositionally biased toward low complexity; sequence PAQPEQQPQGYQHPQQIEAPQNLQQPNFQQHYQNQPQQP. Basic and acidic residues predominate over residues 94–103; sequence QNYEDPNRTP.

It belongs to the TatA/E family. As to quaternary structure, the Tat system comprises two distinct complexes: a TatABC complex, containing multiple copies of TatA, TatB and TatC subunits, and a separate TatA complex, containing only TatA subunits. Substrates initially bind to the TatABC complex, which probably triggers association of the separate TatA complex to form the active translocon.

It localises to the cell membrane. In terms of biological role, part of the twin-arginine translocation (Tat) system that transports large folded proteins containing a characteristic twin-arginine motif in their signal peptide across membranes. TatA could form the protein-conducting channel of the Tat system. This chain is Sec-independent protein translocase protein TatA, found in Corynebacterium efficiens (strain DSM 44549 / YS-314 / AJ 12310 / JCM 11189 / NBRC 100395).